The chain runs to 244 residues: Chlorosome protein I (244 aa).

Positions 1 to 95 (MNLIINDKTA…TVKVLSRPEE (95 aa)) constitute a 2Fe-2S ferredoxin-type domain. 4 residues coordinate [2Fe-2S] cluster: cysteine 33, cysteine 39, cysteine 42, and cysteine 77.

Requires [2Fe-2S] cluster as cofactor.

It is found in the chlorosome. Its function is as follows. Could play a direct role in the oxidation or reduction of the quenching species formed in the chlorosome. The chain is Chlorosome protein I (csmI) from Chlorobaculum tepidum (strain ATCC 49652 / DSM 12025 / NBRC 103806 / TLS) (Chlorobium tepidum).